The chain runs to 655 residues: p-hydroxybenzoic acid efflux pump subunit AaeB (655 aa).

11 consecutive transmembrane segments (helical) span residues F13–L33, W38–P58, L69–I89, L93–V113, W121–L141, E152–I172, L370–V390, F407–P427, Q431–V451, M459–F479, and F482–L502.

Belongs to the aromatic acid exporter ArAE (TC 2.A.85) family.

The protein resides in the cell inner membrane. In terms of biological role, forms an efflux pump with AaeA. Could function as a metabolic relief valve, allowing to eliminate certain compounds when they accumulate to high levels in the cell. The polypeptide is p-hydroxybenzoic acid efflux pump subunit AaeB (Escherichia coli O81 (strain ED1a)).